The primary structure comprises 844 residues: Receptor-like protein 49 (844 aa).

The signal sequence occupies residues 1 to 31; it reads MMYSCRERRMITVKWSLCLIFCLSNSILVFA. Residues 32–803 are Extracellular-facing; the sequence is KHLCLPDQRD…QDEEKEEEEQ (772 aa). Residues Asn-59, Asn-95, Asn-112, and Asn-159 are each glycosylated (N-linked (GlcNAc...) asparagine). LRR repeat units lie at residues 102–126, 136–160, 161–183, 185–208, 209–231, 242–265, 266–290, 292–313, 315–339, 345–362, 363–385, 386–409, 410–434, 436–457, 458–481, 482–504, 506–527, 528–551, 553–574, 575–601, 602–625, 665–689, 690–713, 714–737, and 739–762; these read QHLQ…GLKG, LKYL…LGNL, SYLT…SMGN, NYLR…LGNL, SYLA…SMGN, LNSL…NMSS, LSKL…LFMI, SLVE…NISS, SKLQ…IFSP, YLDV…VSLP, SPIE…LRNQ, TKLY…LWSL, PELQ…VIQG, GELY…LLPV, DSMN…ICEL, DNLV…CFEN, HLYV…EAIS, DRLQ…LINC, ALEF…WLEL, LPNF…SLSF, PRLR…YFAP, FTIY…ISLL, KELI…LSNL, SNLQ…LGEL, and FLAR…QIQT. A glycan (N-linked (GlcNAc...) asparagine) is linked at Asn-207. Residue Asn-262 is glycosylated (N-linked (GlcNAc...) asparagine). Asn-310 carries an N-linked (GlcNAc...) asparagine glycan. Residues Asn-374 and Asn-384 are each glycosylated (N-linked (GlcNAc...) asparagine). Asn-416 is a glycosylation site (N-linked (GlcNAc...) asparagine). N-linked (GlcNAc...) asparagine glycosylation is found at Asn-493, Asn-516, and Asn-550. N-linked (GlcNAc...) asparagine glycosylation is found at Asn-696 and Asn-712. Asn-744 carries an N-linked (GlcNAc...) asparagine glycan. Residues 804–824 traverse the membrane as a helical segment; that stretch reads VFSWIAAAIGYVPGVVCGLTI. Over 825–844 the chain is Cytoplasmic; that stretch reads GHILVSHKRDWFMRIVSLFT.

The protein belongs to the RLP family.

Its subcellular location is the cell membrane. The protein is Receptor-like protein 49 of Arabidopsis thaliana (Mouse-ear cress).